The following is a 438-amino-acid chain: Cobyrinate a,c-diamide synthase (438 aa).

Residues 242–426 form the GATase cobBQ-type domain; the sequence is TIAIARDAAF…FHAYFSSCPA (185 aa). The active-site Nucleophile is the Cys325.

It belongs to the CobB/CbiA family. Requires Mg(2+) as cofactor.

The catalysed reaction is cob(II)yrinate + 2 L-glutamine + 2 ATP + 2 H2O = cob(II)yrinate a,c diamide + 2 L-glutamate + 2 ADP + 2 phosphate + 2 H(+). The protein operates within cofactor biosynthesis; adenosylcobalamin biosynthesis; cob(II)yrinate a,c-diamide from sirohydrochlorin (anaerobic route): step 10/10. Catalyzes the ATP-dependent amidation of the two carboxylate groups at positions a and c of cobyrinate, using either L-glutamine or ammonia as the nitrogen source. The polypeptide is Cobyrinate a,c-diamide synthase (Herminiimonas arsenicoxydans).